The chain runs to 30 residues: Cycloviolacin-H4 (30 aa).

Positions 1–30 (GIPCAESCVWIPCTVTALLGCSCSNNVCYN) form a cross-link, cyclopeptide (Gly-Asn). Cystine bridges form between Cys-4–Cys-21, Cys-8–Cys-23, and Cys-13–Cys-28.

In terms of processing, this is a cyclic peptide.

Its function is as follows. Probably participates in a plant defense mechanism. Has potent hemolytic activity. The sequence is that of Cycloviolacin-H4 from Viola hederacea (Australian violet).